The primary structure comprises 130 residues: MRHYEIVFMVHPDQSEQVPGMIERYSATITNAAGTIHRLEDWGRRQLAYPINKLHKAHYVLLNVEAPQEAIDELETNFRFNDAVIRSMVMRVKHAVTEASPMVKAKDERRERHDFASEANDDSEAGDSEE.

Positions 99 to 130 (ASPMVKAKDERRERHDFASEANDDSEAGDSEE) are disordered. Over residues 104–116 (KAKDERRERHDFA) the composition is skewed to basic and acidic residues. Residues 119 to 130 (ANDDSEAGDSEE) are compositionally biased toward acidic residues.

Belongs to the bacterial ribosomal protein bS6 family.

Functionally, binds together with bS18 to 16S ribosomal RNA. This chain is Small ribosomal subunit protein bS6, found in Yersinia enterocolitica serotype O:8 / biotype 1B (strain NCTC 13174 / 8081).